Here is a 1038-residue protein sequence, read N- to C-terminus: MPVSMAVCETANVVNAALRESLGGNSSAGSSTDQAKSGEDTNGSLQNHIVANAKRILMAKIEYEEVPNYHESVLENLKSKYIVIKPGNPGAINGFSGKNNTGKLVGANGHDNNGARKQAEHPNNQSHHINHHNHQHPTSNPNELPKPKRVLYPRENIRIGWKQSERKWQVGTGMINVGNTCYLNSTLQALLHIPALANWLVSEQAHLADCNVAEPGSGCIICAMTKTLLATQSNQSAVRPFLIYSKLKQICKHMVVGRQEDAHEFLRFLVEAMERAYLMRFRNYKELDQLVKETTPLGQIFGGYLRSEVRCLSCNHVSITFQHFQDLLLDIRKADSLEDAFEGHFSRERLEDMGYKCEGCKKKVSATKQFSLERAPITLCIQLKRFSMIGNKLTKQISFKSRIDLSKYAARSQAAQAQPLTYRLVSMVTHLGASQHCGHYTAIGSTDTGSFYNFDDSYVRPIAMHSVCNTNAYIMFFELDLSQAASPAANRPNGVRLTNGHSTTPVPAATVSSPSPTRFIGPQLPAGGANGYTNGNAQKTAIQFKQQNQQSPQNGLQLGTGKFQDTAKPPLVGAHAKGEATSAPTANGNKSSSPSSNSSSNHKSINQQQYLPISSDDEDIEDEMKPRPTTAQLPSMPNMTENHTEPKAKSPVKIQVKTPVKTPLKSLVPYESASEEEEAPLPNPRKRPSGEDSSESDQESGQTNGHSKTNGSHTNGSASSSVHVNNSKQKTDAIDEIFKSLKKSADSDEDDDEEEPSIQLTNGWHPQKQSQSQSKAPPSPKTPPSPAVIKSKTGIWKVTRNDEVDAIEDDVDVVVVEGSPVKIPTPNKNHRNPFSSSKPSTDSPATPGAKRQKLLNGSALKSHQQPRVGNGYQSNATSNGSTINELLKQSYRGYGSPVLSWNGKPAELEKELLVDAREQRQRDIDDDEENEMDRGRQRKVKSGSAKGNNASNSTPGYNPFQEYEGQKRWNKNGGGGGFPRFYNQNYRQNFQQRNKFKFNRFGGPGSAKFQQQRALQRHLSAGGGFSRRQPSAQQQQQT.

2 disordered regions span residues 22-44 (LGGN…TNGS) and 107-148 (ANGH…PKPK). Residues 23–44 (GGNSSAGSSTDQAKSGEDTNGS) are compositionally biased toward polar residues. The USP domain maps to 172-480 (TGMINVGNTC…NAYIMFFELD (309 aa)). Cys181 serves as the catalytic Nucleophile. Catalysis depends on His439, which acts as the Proton acceptor. Disordered stretches follow at residues 487–794 (PAAN…SKTG), 818–881 (GSPV…SNGS), 912–985 (LLVD…YNQN), and 1000–1038 (RFGG…QQQT). Low complexity-rich tracts occupy residues 502-517 (STTP…PSPT), 546-559 (QQNQ…LQLG), and 587-606 (NGNK…KSIN). Residues Ser513 and Ser515 each carry the phosphoserine modification. The span at 629 to 641 (TTAQLPSMPNMTE) shows a compositional bias: polar residues. A phosphothreonine mark is found at Thr658 and Thr662. Phosphoserine occurs at positions 672 and 674. A compositionally biased stretch (polar residues) spans 703-728 (TNGHSKTNGSHTNGSASSSVHVNNSK). Over residues 729-746 (QKTDAIDEIFKSLKKSAD) the composition is skewed to basic and acidic residues. Phosphoserine is present on Ser747. Residues 747 to 756 (SDEDDDEEEP) show a composition bias toward acidic residues. The span at 766–776 (PQKQSQSQSKA) shows a compositional bias: low complexity. The segment covering 777 to 786 (PPSPKTPPSP) has biased composition (pro residues). Residue Ser779 is modified to Phosphoserine. Thr782 is modified (phosphothreonine). Residues Ser785 and Ser819 each carry the phosphoserine modification. Thr825 carries the post-translational modification Phosphothreonine. The span at 832-844 (NPFSSSKPSTDSP) shows a compositional bias: polar residues. At Ser843 the chain carries Phosphoserine. Thr846 is subject to Phosphothreonine. Over residues 859–881 (ALKSHQQPRVGNGYQSNATSNGS) the composition is skewed to polar residues. Over residues 912–923 (LLVDAREQRQRD) the composition is skewed to basic and acidic residues. Low complexity predominate over residues 942–953 (SGSAKGNNASNS).

The protein belongs to the peptidase C19 family. Interacts with atms/PAF1, but not with CycT. Interacts (via C-terminus) with imd (via N-terminus).

Its subcellular location is the nucleus. It is found in the nucleolus. It localises to the cytoplasm. It carries out the reaction Thiol-dependent hydrolysis of ester, thioester, amide, peptide and isopeptide bonds formed by the C-terminal Gly of ubiquitin (a 76-residue protein attached to proteins as an intracellular targeting signal).. Hydrolase that deubiquitinates polyubiquitinated target proteins including imd. Required for preventing the constitutive activation of the imd/NF-kappa-B (Imd) signaling cascade under unchalleneged conditions. Deubiquitinates imd linked 'Lys-63' chains which leads its proteasomal degradation and consequently down-regulation of the Imd signaling cascade. Removal of the activating 'Lys-63'-linked chains is likely to enable their replacement with 'Lys-48'-linked chains which act as 'tags' the for proteasomal degradation of imd. Required for maintaining multiple types of adult stem cells, including male and female germline, epithelial follicle cell and intestinal stem cells. May function as a transcriptional repressor by continually deubiquiting histone H2B at the promoters of genes critical for cellular differentiation, thereby preventing histone H3 'Lys-4' trimethylation (H3K4me3). Controls selective autophagy activation by ubiquitinated proteins. The polypeptide is Ubiquitin carboxyl-terminal hydrolase 36 (scny) (Drosophila melanogaster (Fruit fly)).